Consider the following 236-residue polypeptide: Small ribosomal subunit protein uS2c (236 aa).

This sequence belongs to the universal ribosomal protein uS2 family.

The protein resides in the plastid. It is found in the chloroplast. The sequence is that of Small ribosomal subunit protein uS2c (rps2) from Calycanthus floridus var. glaucus (Eastern sweetshrub).